A 90-amino-acid polypeptide reads, in one-letter code: uncharacterized protein (90 aa).

Belongs to the barstar family.

This is an uncharacterized protein from Escherichia coli O157:H7.